The following is a 171-amino-acid chain: 3-hydroxydecanoyl-[acyl-carrier-protein] dehydratase (171 aa).

Histidine 70 is an active-site residue.

This sequence belongs to the thioester dehydratase family. FabA subfamily. Homodimer.

It localises to the cytoplasm. The catalysed reaction is a (3R)-hydroxyacyl-[ACP] = a (2E)-enoyl-[ACP] + H2O. It carries out the reaction (3R)-hydroxydecanoyl-[ACP] = (2E)-decenoyl-[ACP] + H2O. The enzyme catalyses (2E)-decenoyl-[ACP] = (3Z)-decenoyl-[ACP]. Its pathway is lipid metabolism; fatty acid biosynthesis. Functionally, necessary for the introduction of cis unsaturation into fatty acids. Catalyzes the dehydration of (3R)-3-hydroxydecanoyl-ACP to E-(2)-decenoyl-ACP and then its isomerization to Z-(3)-decenoyl-ACP. Can catalyze the dehydratase reaction for beta-hydroxyacyl-ACPs with saturated chain lengths up to 16:0, being most active on intermediate chain length. The protein is 3-hydroxydecanoyl-[acyl-carrier-protein] dehydratase of Xanthomonas oryzae pv. oryzae (strain MAFF 311018).